A 45-amino-acid polypeptide reads, in one-letter code: Psychimicin (45 aa).

3 disulfides stabilise this stretch: cysteine 10-cysteine 24, cysteine 14-cysteine 36, and cysteine 25-cysteine 42.

As to quaternary structure, monomer. Hemolymph.

It is found in the secreted. Functionally, has antimicrobial activity. Is particularly active against fungi, and to a lesser extent against Gram-positive and Gram-negative bacteria. This Oiketicus kirbyi (Bagworm moth) protein is Psychimicin.